Reading from the N-terminus, the 254-residue chain is CRISPR-associated endoribonuclease Cas6 1 (254 aa).

Tyrosine 32 serves as the catalytic Proton acceptor. Histidine 47 serves as the catalytic Proton donor.

It belongs to the CRISPR-associated protein Cas6/Cse3/CasE family.

Its function is as follows. CRISPR (clustered regularly interspaced short palindromic repeat) is an adaptive immune system that provides protection against mobile genetic elements (viruses, transposable elements and conjugative plasmids). CRISPR clusters contain sequences complementary to antecedent mobile elements and target invading nucleic acids. CRISPR clusters are transcribed and processed into CRISPR RNA (crRNA). This protein processes pre-crRNA into individual crRNA units. The chain is CRISPR-associated endoribonuclease Cas6 1 (cas6a) from Methanocaldococcus jannaschii (strain ATCC 43067 / DSM 2661 / JAL-1 / JCM 10045 / NBRC 100440) (Methanococcus jannaschii).